Reading from the N-terminus, the 309-residue chain is Olfactory receptor 7A40 (309 aa).

Topologically, residues 1–26 (MELKNDTQISKFILLGISEDPLWQPF) are extracellular. A glycan (N-linked (GlcNAc...) asparagine) is linked at Asn5. Residues 27–47 (LFGLFLFMYLVTLLGNLLIII) form a helical membrane-spanning segment. At 48–57 (ATITDSHLHT) the chain is on the cytoplasmic side. Residues 58–78 (PMYFFLSNLSFADICFTSASI) form a helical membrane-spanning segment. The Extracellular segment spans residues 79–97 (PKMLVNIQTKNKVITYEGC). Cys97 and Cys179 are oxidised to a cystine. A helical membrane pass occupies residues 98–118 (ISQVFFFILFGVLDNFLLAVM). The Cytoplasmic segment spans residues 119–139 (AYDRYVAICHPLHYMVIMNCR). The chain crosses the membrane as a helical span at residues 140 to 160 (LCGFLVLGSWVTTALNSLLQS). The Extracellular portion of the chain corresponds to 161–196 (SMALRLSFCTDLKIPHFVCELNQLVLLACNDTFPND). Residues 197–217 (MVMYFAAILLGGGPLAGILYS) form a helical membrane-spanning segment. Topologically, residues 218 to 244 (YSKIVSSIRAISSSQGKYKAFSTCASH) are cytoplasmic. Residues 245–265 (LSVVSLFYSTLLGVYLSSSFT) traverse the membrane as a helical segment. Topologically, residues 266 to 269 (QNSH) are extracellular. A helical membrane pass occupies residues 270–292 (STARASVMYSVVTPMLNPFIYSL). The Cytoplasmic segment spans residues 293–309 (RNKDLMGALRRLLRRKS).

Belongs to the G-protein coupled receptor 1 family.

It is found in the cell membrane. Its function is as follows. Odorant receptor. The polypeptide is Olfactory receptor 7A40 (Mus musculus (Mouse)).